We begin with the raw amino-acid sequence, 195 residues long: MSTTIDVPESNNVAKEKVLLLGARPRPGGWKKGVAIMDFILRLGAIAAAPGAAATMGTSDQTLPFFTQFFQFEASYDSFTTFQFFVITMALVAGYLVLSLPFSIVVIIRPHAVGPRLFLIILDTVFLTLATASGASAAAIVYLAHNGNQDSNWLAICNQFGDFCAQTSGAVVSSLVSVVIFVLLIVMSALALRRN.

Residues Met-1–Gly-33 are Cytoplasmic-facing. Residues Val-34–Ala-54 form a helical membrane-spanning segment. Topologically, residues Thr-55–Val-86 are extracellular. The helical transmembrane segment at Ile-87–Ile-107 threads the bilayer. Over Ile-108–Arg-116 the chain is Cytoplasmic. Residues Leu-117–Ala-137 form a helical membrane-spanning segment. Over Ala-138–Gly-169 the chain is Extracellular. Residues Ala-170–Leu-190 traverse the membrane as a helical segment. Topologically, residues Ala-191 to Asn-195 are cytoplasmic.

This sequence belongs to the Casparian strip membrane proteins (CASP) family. As to quaternary structure, homodimer and heterodimers.

It localises to the cell membrane. In terms of biological role, regulates membrane-cell wall junctions and localized cell wall deposition. Required for establishment of the Casparian strip membrane domain (CSD) and the subsequent formation of Casparian strips, a cell wall modification of the root endodermis that determines an apoplastic barrier between the intraorganismal apoplasm and the extraorganismal apoplasm and prevents lateral diffusion. This is Casparian strip membrane protein 3 from Glycine max (Soybean).